A 365-amino-acid polypeptide reads, in one-letter code: U-box domain-containing protein 56 (365 aa).

Residues 176–281 (YEEQRRRLEI…ELLRALEKGE (106 aa)) are a coiled coil. The U-box domain maps to 293–365 (EPPQCFICPI…AIKDWLQQHP (73 aa)).

The enzyme catalyses S-ubiquitinyl-[E2 ubiquitin-conjugating enzyme]-L-cysteine + [acceptor protein]-L-lysine = [E2 ubiquitin-conjugating enzyme]-L-cysteine + N(6)-ubiquitinyl-[acceptor protein]-L-lysine.. Its pathway is protein modification; protein ubiquitination. Functionally, functions as an E3 ubiquitin ligase. This chain is U-box domain-containing protein 56 (PUB56), found in Arabidopsis thaliana (Mouse-ear cress).